Consider the following 454-residue polypeptide: Epoxide hydrolase 1 (454 aa).

Residues 1-21 traverse the membrane as a helical segment; that stretch reads MWLEILLASVLGFVIYWFVSK. The Cytoplasmic portion of the chain corresponds to 22–454; sequence DKEETLLLGD…RKFMGLLEQQ (433 aa). Asp226 (nucleophile) is an active-site residue. Arg294 carries the post-translational modification Dimethylated arginine. Tyr373 acts as the Proton donor in catalysis. The active-site Proton acceptor is His430.

It belongs to the peptidase S33 family.

It is found in the microsome membrane. Its subcellular location is the endoplasmic reticulum membrane. The enzyme catalyses cis-stilbene oxide + H2O = (1R,2R)-hydrobenzoin. The catalysed reaction is 1-(4-methoxyphenyl)-N-methyl-N-[(3-methyloxetan-3-yl)methyl]methanamine + H2O = 2-{[(4-methoxybenzyl)(methyl)amino]methyl}-2-methylpropane-1,3-diol. It carries out the reaction 8,9-epoxy-(5Z,11Z,14Z)-eicosatrienoate + H2O = 8,9-dihydroxy-(5Z,11Z,14Z)-eicosatrienoate. It catalyses the reaction 11,12-epoxy-(5Z,8Z,14Z)-eicosatrienoate + H2O = 11,12-dihydroxy-(5Z,8Z,14Z)-eicosatrienoate. The enzyme catalyses 2-(5Z,8Z,11Z,14Z-eicosatetraenoyl)-glycerol + H2O = glycerol + (5Z,8Z,11Z,14Z)-eicosatetraenoate + H(+). Inhibited by 10-hydroxystearamide and methoxy-arachidonyl fluorophosphate. Its function is as follows. Biotransformation enzyme that catalyzes the hydrolysis of arene and aliphatic epoxides to less reactive and more water soluble dihydrodiols by the trans addition of water. May play a role in the metabolism of endogenous lipids such as epoxide-containing fatty acids. Metabolizes the abundant endocannabinoid 2-arachidonoylglycerol (2-AG) to free arachidonic acid (AA) and glycerol. Binds 20(S)-hydroxycholesterol (20(S)-OHC). The protein is Epoxide hydrolase 1 (EPHX1) of Sus scrofa (Pig).